Consider the following 1283-residue polypeptide: Peroxisomal ATPase PEX1 (1283 aa).

Residues 346-367 (SKTKQNVLSPEKEKQMSEPLDQ) are disordered. Phosphoserine is present on Ser-354. The segment covering 355 to 367 (PEKEKQMSEPLDQ) has biased composition (basic and acidic residues). ATP is bound by residues 599–606 (GGKGSGKS) and 881–888 (GPPGTGKT). Residues Ser-1181, Ser-1209, and Ser-1211 each carry the phosphoserine modification. A disordered region spans residues 1260–1283 (FQNPKRRKNQSGTMFRPGQKVTLA).

The protein belongs to the AAA ATPase family. As to quaternary structure, homooligomer; homooligomerizes in the cytosol, interaction with PEX6 promotes dissociation of the homooligomer. Interacts with PEX6; forming the PEX1-PEX6 AAA ATPase complex, which is composed of a heterohexamer formed by a trimer of PEX1-PEX6 dimers. Interacts indirectly with PEX26, via its interaction with PEX6.

It is found in the cytoplasm. It localises to the cytosol. The protein resides in the peroxisome membrane. The catalysed reaction is ATP + H2O = ADP + phosphate + H(+). In terms of biological role, component of the PEX1-PEX6 AAA ATPase complex, a protein dislocase complex that mediates the ATP-dependent extraction of the PEX5 receptor from peroxisomal membranes, an essential step for PEX5 recycling. Specifically recognizes PEX5 monoubiquitinated at 'Cys-11', and pulls it out of the peroxisome lumen through the PEX2-PEX10-PEX12 retrotranslocation channel. Extraction by the PEX1-PEX6 AAA ATPase complex is accompanied by unfolding of the TPR repeats and release of bound cargo from PEX5. In Homo sapiens (Human), this protein is Peroxisomal ATPase PEX1.